The primary structure comprises 316 residues: Aspartate carbamoyltransferase catalytic subunit (316 aa).

2 residues coordinate carbamoyl phosphate: R66 and T67. K94 contributes to the L-aspartate binding site. Carbamoyl phosphate-binding residues include R116, H146, and Q149. Positions 180 and 235 each coordinate L-aspartate. Residues G276 and P277 each coordinate carbamoyl phosphate.

Belongs to the aspartate/ornithine carbamoyltransferase superfamily. ATCase family. As to quaternary structure, heterododecamer (2C3:3R2) of six catalytic PyrB chains organized as two trimers (C3), and six regulatory PyrI chains organized as three dimers (R2).

The enzyme catalyses carbamoyl phosphate + L-aspartate = N-carbamoyl-L-aspartate + phosphate + H(+). The protein operates within pyrimidine metabolism; UMP biosynthesis via de novo pathway; (S)-dihydroorotate from bicarbonate: step 2/3. Its function is as follows. Catalyzes the condensation of carbamoyl phosphate and aspartate to form carbamoyl aspartate and inorganic phosphate, the committed step in the de novo pyrimidine nucleotide biosynthesis pathway. The polypeptide is Aspartate carbamoyltransferase catalytic subunit (Stenotrophomonas maltophilia (strain R551-3)).